A 532-amino-acid polypeptide reads, in one-letter code: CTP synthase (532 aa).

Positions 1–265 (MKYIVVTGGV…DEYLMRKLNL (265 aa)) are amidoligase domain. Position 12 (Ser12) interacts with CTP. Ser12 is a binding site for UTP. Residues 13 to 18 (GLGKGI) and Asp70 contribute to the ATP site. Asp70 and Glu140 together coordinate Mg(2+). CTP-binding positions include 147–149 (DIE), 186–191 (KTKPTQ), and Lys222. UTP contacts are provided by residues 186-191 (KTKPTQ) and Lys222. In terms of domain architecture, Glutamine amidotransferase type-1 spans 289–529 (SIAIVGKYVD…VRAALKYRRE (241 aa)). Position 349 (Gly349) interacts with L-glutamine. The active-site Nucleophile; for glutamine hydrolysis is Cys376. L-glutamine is bound by residues 377-380 (FGFQ), Glu400, and Arg457. Residues His502 and Glu504 contribute to the active site.

The protein belongs to the CTP synthase family. Homotetramer.

The enzyme catalyses UTP + L-glutamine + ATP + H2O = CTP + L-glutamate + ADP + phosphate + 2 H(+). It catalyses the reaction L-glutamine + H2O = L-glutamate + NH4(+). It carries out the reaction UTP + NH4(+) + ATP = CTP + ADP + phosphate + 2 H(+). It participates in pyrimidine metabolism; CTP biosynthesis via de novo pathway; CTP from UDP: step 2/2. Its activity is regulated as follows. Allosterically activated by GTP, when glutamine is the substrate; GTP has no effect on the reaction when ammonia is the substrate. The allosteric effector GTP functions by stabilizing the protein conformation that binds the tetrahedral intermediate(s) formed during glutamine hydrolysis. Inhibited by the product CTP, via allosteric rather than competitive inhibition. Functionally, catalyzes the ATP-dependent amination of UTP to CTP with either L-glutamine or ammonia as the source of nitrogen. Regulates intracellular CTP levels through interactions with the four ribonucleotide triphosphates. In Archaeoglobus fulgidus (strain ATCC 49558 / DSM 4304 / JCM 9628 / NBRC 100126 / VC-16), this protein is CTP synthase.